Here is a 230-residue protein sequence, read N- to C-terminus: MKKKGLNYLMQVAIDGPASAGKSTVAKIIAHNLGYIYIDTGAMYRACTLIAHDNNVDYGDEKAILNLIDHSTIDFKQEDGEQKVYVNGKDVSIDIRTPEITENVSQVSALRSIREKMVELQREMAGKHDVIMDGRDIGTTVLPDAEVKIFLIASVASRAKRRFLDFQEKGIHQDLKDIEHDIEVRDYKDSHREISPLKKADDAIELDTTNLTIDEVVAKITEIIQKKQKN.

16–24 (GPASAGKST) lines the ATP pocket.

The protein belongs to the cytidylate kinase family. Type 1 subfamily.

It is found in the cytoplasm. The catalysed reaction is CMP + ATP = CDP + ADP. It carries out the reaction dCMP + ATP = dCDP + ADP. The chain is Cytidylate kinase from Lactobacillus johnsonii (strain CNCM I-12250 / La1 / NCC 533).